The sequence spans 344 residues: L-rhamnose-proton symporter (344 aa).

The next 10 membrane-spanning stretches (helical) occupy residues 4–24 (AITM…CFYA), 38–58 (WSVG…ALLL), 68–88 (FSLS…IGNI), 101–121 (MGIG…TPII), 137–157 (TLLG…AGQL), 175–195 (LVLA…MNAA), 214–234 (LPSY…FCFI), 259–279 (VLLS…YAWG), 290–310 (ISWM…GLVL), and 323–343 (VLSL…IGMA).

This sequence belongs to the L-rhamnose transporter (TC 2.A.7.6) family.

The protein localises to the cell inner membrane. It carries out the reaction L-rhamnopyranose(in) + H(+)(in) = L-rhamnopyranose(out) + H(+)(out). Its function is as follows. Uptake of L-rhamnose across the cytoplasmic membrane with the concomitant transport of protons into the cell (symport system). The protein is L-rhamnose-proton symporter of Escherichia coli (strain ATCC 8739 / DSM 1576 / NBRC 3972 / NCIMB 8545 / WDCM 00012 / Crooks).